Reading from the N-terminus, the 100-residue chain is Small ribosomal subunit protein uS14 (100 aa).

Zn(2+) contacts are provided by Cys-63, Cys-66, Cys-79, and Cys-82.

The protein belongs to the universal ribosomal protein uS14 family. In terms of assembly, part of the 30S ribosomal subunit. Contacts proteins S3 and S10. Zn(2+) is required as a cofactor.

Binds 16S rRNA, required for the assembly of 30S particles and may also be responsible for determining the conformation of the 16S rRNA at the A site. This Legionella pneumophila (strain Paris) protein is Small ribosomal subunit protein uS14 (rpsN).